Here is a 100-residue protein sequence, read N- to C-terminus: MRASLLLFILLVYLAHAPQAQGVFGPRRCKGKLGYCRSKCQSKQVELGKCSTKAICCGISTGTSSSQGSHEVPVINSEPALESKPEPQDTQEEEATMVSE.

An N-terminal signal peptide occupies residues 1–22; that stretch reads MRASLLLFILLVYLAHAPQAQG. Positions 23 to 26 are excised as a propeptide; it reads VFGP. 3 disulfides stabilise this stretch: C29–C56, C36–C50, and C40–C57. Residues 60–100 form a disordered region; that stretch reads STGTSSSQGSHEVPVINSEPALESKPEPQDTQEEEATMVSE. Acidic residues predominate over residues 89 to 100; the sequence is DTQEEEATMVSE.

It belongs to the beta-defensin family. Highly expressed in kidney, lowly expressed in spleen, and expressed at lower levels in lung.

The protein localises to the secreted. Has antimicrobial activity. The chain is Defensin-B4 from Ornithorhynchus anatinus (Duckbill platypus).